The primary structure comprises 261 residues: Indole-3-glycerol phosphate synthase (261 aa).

This sequence belongs to the TrpC family.

It catalyses the reaction 1-(2-carboxyphenylamino)-1-deoxy-D-ribulose 5-phosphate + H(+) = (1S,2R)-1-C-(indol-3-yl)glycerol 3-phosphate + CO2 + H2O. It participates in amino-acid biosynthesis; L-tryptophan biosynthesis; L-tryptophan from chorismate: step 4/5. The polypeptide is Indole-3-glycerol phosphate synthase (Burkholderia pseudomallei (strain 1106a)).